A 199-amino-acid polypeptide reads, in one-letter code: Glycerol-3-phosphate acyltransferase (199 aa).

Transmembrane regions (helical) follow at residues Ala-5–Cys-25, Ala-54–Phe-74, Ala-82–Phe-102, Val-114–Phe-134, and Tyr-154–Ile-174.

Belongs to the PlsY family. In terms of assembly, probably interacts with PlsX.

The protein resides in the cell inner membrane. The catalysed reaction is an acyl phosphate + sn-glycerol 3-phosphate = a 1-acyl-sn-glycero-3-phosphate + phosphate. The protein operates within lipid metabolism; phospholipid metabolism. Catalyzes the transfer of an acyl group from acyl-phosphate (acyl-PO(4)) to glycerol-3-phosphate (G3P) to form lysophosphatidic acid (LPA). This enzyme utilizes acyl-phosphate as fatty acyl donor, but not acyl-CoA or acyl-ACP. The protein is Glycerol-3-phosphate acyltransferase of Haemophilus ducreyi (strain 35000HP / ATCC 700724).